Consider the following 272-residue polypeptide: Putative pyruvate, phosphate dikinase regulatory protein 1 (272 aa).

151 to 158 (GISRTSKT) provides a ligand contact to ADP.

The protein belongs to the pyruvate, phosphate/water dikinase regulatory protein family. PDRP subfamily.

The catalysed reaction is N(tele)-phospho-L-histidyl/L-threonyl-[pyruvate, phosphate dikinase] + ADP = N(tele)-phospho-L-histidyl/O-phospho-L-threonyl-[pyruvate, phosphate dikinase] + AMP + H(+). It catalyses the reaction N(tele)-phospho-L-histidyl/O-phospho-L-threonyl-[pyruvate, phosphate dikinase] + phosphate + H(+) = N(tele)-phospho-L-histidyl/L-threonyl-[pyruvate, phosphate dikinase] + diphosphate. In terms of biological role, bifunctional serine/threonine kinase and phosphorylase involved in the regulation of the pyruvate, phosphate dikinase (PPDK) by catalyzing its phosphorylation/dephosphorylation. This Staphylococcus epidermidis (strain ATCC 35984 / DSM 28319 / BCRC 17069 / CCUG 31568 / BM 3577 / RP62A) protein is Putative pyruvate, phosphate dikinase regulatory protein 1.